We begin with the raw amino-acid sequence, 128 residues long: Large ribosomal subunit protein bL17 (128 aa).

It belongs to the bacterial ribosomal protein bL17 family. As to quaternary structure, part of the 50S ribosomal subunit. Contacts protein L32.

This is Large ribosomal subunit protein bL17 from Streptococcus mutans serotype c (strain ATCC 700610 / UA159).